A 662-amino-acid polypeptide reads, in one-letter code: UPF0313 protein CPE1196 (662 aa).

The region spanning alanine 296–lysine 567 is the Radical SAM core domain. Positions 310, 314, and 317 each coordinate [4Fe-4S] cluster. The interval arginine 597 to arginine 662 is disordered. The span at asparagine 618–lysine 632 shows a compositional bias: basic and acidic residues. Residues arginine 633 to lysine 644 show a composition bias toward basic residues.

It belongs to the UPF0313 family. The cofactor is [4Fe-4S] cluster.

In Clostridium perfringens (strain 13 / Type A), this protein is UPF0313 protein CPE1196.